Consider the following 360-residue polypeptide: Aminomethyltransferase (360 aa).

Belongs to the GcvT family. In terms of assembly, the glycine cleavage system is composed of four proteins: P, T, L and H.

It carries out the reaction N(6)-[(R)-S(8)-aminomethyldihydrolipoyl]-L-lysyl-[protein] + (6S)-5,6,7,8-tetrahydrofolate = N(6)-[(R)-dihydrolipoyl]-L-lysyl-[protein] + (6R)-5,10-methylene-5,6,7,8-tetrahydrofolate + NH4(+). Functionally, the glycine cleavage system catalyzes the degradation of glycine. The protein is Aminomethyltransferase of Flavobacterium psychrophilum (strain ATCC 49511 / DSM 21280 / CIP 103535 / JIP02/86).